A 423-amino-acid polypeptide reads, in one-letter code: Imidazolonepropionase (423 aa).

Residues H78 and H80 each contribute to the Fe(3+) site. 2 residues coordinate Zn(2+): H78 and H80. 4-imidazolone-5-propanoate contacts are provided by R87, Y150, and H183. An N-formimidoyl-L-glutamate-binding site is contributed by Y150. A Fe(3+)-binding site is contributed by H247. A Zn(2+)-binding site is contributed by H247. Position 250 (E250) interacts with 4-imidazolone-5-propanoate. Residue D322 participates in Fe(3+) binding. D322 provides a ligand contact to Zn(2+). N-formimidoyl-L-glutamate contacts are provided by N324 and G326. Position 327 (S327) interacts with 4-imidazolone-5-propanoate.

The protein belongs to the metallo-dependent hydrolases superfamily. HutI family. Requires Zn(2+) as cofactor. The cofactor is Fe(3+).

The protein localises to the cytoplasm. The catalysed reaction is 4-imidazolone-5-propanoate + H2O = N-formimidoyl-L-glutamate. It functions in the pathway amino-acid degradation; L-histidine degradation into L-glutamate; N-formimidoyl-L-glutamate from L-histidine: step 3/3. Functionally, catalyzes the hydrolytic cleavage of the carbon-nitrogen bond in imidazolone-5-propanoate to yield N-formimidoyl-L-glutamate. It is the third step in the universal histidine degradation pathway. The sequence is that of Imidazolonepropionase from Bacillus cereus (strain B4264).